The following is a 341-amino-acid chain: Holliday junction branch migration complex subunit RuvB (341 aa).

The large ATPase domain (RuvB-L) stretch occupies residues 1 to 180 (MAKSHTLNPE…FGIQLRLDYY (180 aa)). ATP contacts are provided by leucine 19, arginine 20, glycine 61, lysine 64, threonine 65, threonine 66, arginine 170, tyrosine 180, and arginine 217. Residue threonine 65 participates in Mg(2+) binding. The segment at 181–251 (NDEEMKEIVL…LCLKAFEKMG (71 aa)) is small ATPAse domain (RuvB-S). The tract at residues 254–341 (DLGLDGMDRQ…ENHGQDPTLF (88 aa)) is head domain (RuvB-H). Residues arginine 309 and arginine 314 each contribute to the DNA site.

Belongs to the RuvB family. As to quaternary structure, homohexamer. Forms an RuvA(8)-RuvB(12)-Holliday junction (HJ) complex. HJ DNA is sandwiched between 2 RuvA tetramers; dsDNA enters through RuvA and exits via RuvB. An RuvB hexamer assembles on each DNA strand where it exits the tetramer. Each RuvB hexamer is contacted by two RuvA subunits (via domain III) on 2 adjacent RuvB subunits; this complex drives branch migration. In the full resolvosome a probable DNA-RuvA(4)-RuvB(12)-RuvC(2) complex forms which resolves the HJ.

Its subcellular location is the cytoplasm. It carries out the reaction ATP + H2O = ADP + phosphate + H(+). In terms of biological role, the RuvA-RuvB-RuvC complex processes Holliday junction (HJ) DNA during genetic recombination and DNA repair, while the RuvA-RuvB complex plays an important role in the rescue of blocked DNA replication forks via replication fork reversal (RFR). RuvA specifically binds to HJ cruciform DNA, conferring on it an open structure. The RuvB hexamer acts as an ATP-dependent pump, pulling dsDNA into and through the RuvAB complex. RuvB forms 2 homohexamers on either side of HJ DNA bound by 1 or 2 RuvA tetramers; 4 subunits per hexamer contact DNA at a time. Coordinated motions by a converter formed by DNA-disengaged RuvB subunits stimulates ATP hydrolysis and nucleotide exchange. Immobilization of the converter enables RuvB to convert the ATP-contained energy into a lever motion, pulling 2 nucleotides of DNA out of the RuvA tetramer per ATP hydrolyzed, thus driving DNA branch migration. The RuvB motors rotate together with the DNA substrate, which together with the progressing nucleotide cycle form the mechanistic basis for DNA recombination by continuous HJ branch migration. Branch migration allows RuvC to scan DNA until it finds its consensus sequence, where it cleaves and resolves cruciform DNA. This is Holliday junction branch migration complex subunit RuvB from Leptospira borgpetersenii serovar Hardjo-bovis (strain L550).